A 136-amino-acid polypeptide reads, in one-letter code: Small ribosomal subunit protein uS12 (136 aa).

Residues 1–28 form a disordered region; sequence MPTIQQLIRSERQELKKKTKSPALKSCP. Residue D89 is modified to 3-methylthioaspartic acid. The interval 101-136 is disordered; that stretch reads TLDTAGVKDRKQGRSKYGAKRPKPGAASTASTGKKR. The segment covering 113-123 has biased composition (basic residues); sequence GRSKYGAKRPK.

This sequence belongs to the universal ribosomal protein uS12 family. Part of the 30S ribosomal subunit. Contacts proteins S8 and S17. May interact with IF1 in the 30S initiation complex.

Functionally, with S4 and S5 plays an important role in translational accuracy. Its function is as follows. Interacts with and stabilizes bases of the 16S rRNA that are involved in tRNA selection in the A site and with the mRNA backbone. Located at the interface of the 30S and 50S subunits, it traverses the body of the 30S subunit contacting proteins on the other side and probably holding the rRNA structure together. The combined cluster of proteins S8, S12 and S17 appears to hold together the shoulder and platform of the 30S subunit. The sequence is that of Small ribosomal subunit protein uS12 from Cyanothece sp. (strain PCC 7425 / ATCC 29141).